Here is a 116-residue protein sequence, read N- to C-terminus: Phycoerythrin alpha-3 subunit (116 aa).

(2R,3E)-phycoerythrobilin is bound by residues Ser53, Glu63, Arg64, Cys67, and Lys85.

It belongs to the phycoerythrin family. In terms of assembly, heterotetramer of 2 different alpha chains and 2 identical beta chains which form 2 alpha-beta heterodimers within the heterotetramer. The two alpha-beta heterodimers are rotated to an open configuration in contrast to the closed configuration found in other cryptophyte species due to the insertion of a single amino acid, Asp-65, in a conserved region of the alpha chain. In the open form, the central chromophores are not in physical contact but are separated by a water-filled channel. In terms of processing, contains three phycoerythrobilin chromophores with binding mediated by both the alpha and beta subunits.

It localises to the plastid. The protein localises to the chloroplast thylakoid membrane. Light-harvesting photosynthetic tetrapyrrole chromophore-protein from the phycobiliprotein complex. The sequence is that of Phycoerythrin alpha-3 subunit from Hemiselmis andersenii (Cryptophyte alga).